A 123-amino-acid chain; its full sequence is Ribosome-binding factor A (123 aa).

It belongs to the RbfA family. Monomer. Binds 30S ribosomal subunits, but not 50S ribosomal subunits or 70S ribosomes.

The protein resides in the cytoplasm. Its function is as follows. One of several proteins that assist in the late maturation steps of the functional core of the 30S ribosomal subunit. Associates with free 30S ribosomal subunits (but not with 30S subunits that are part of 70S ribosomes or polysomes). Required for efficient processing of 16S rRNA. May interact with the 5'-terminal helix region of 16S rRNA. This Cupriavidus metallidurans (strain ATCC 43123 / DSM 2839 / NBRC 102507 / CH34) (Ralstonia metallidurans) protein is Ribosome-binding factor A.